Reading from the N-terminus, the 144-residue chain is Ribosomal RNA large subunit methyltransferase H (144 aa).

Residues L63, G92, and 111–116 each bind S-adenosyl-L-methionine; that span reads LSPMTF.

Belongs to the RNA methyltransferase RlmH family. In terms of assembly, homodimer.

The protein localises to the cytoplasm. It catalyses the reaction pseudouridine(1915) in 23S rRNA + S-adenosyl-L-methionine = N(3)-methylpseudouridine(1915) in 23S rRNA + S-adenosyl-L-homocysteine + H(+). Specifically methylates the pseudouridine at position 1915 (m3Psi1915) in 23S rRNA. The sequence is that of Ribosomal RNA large subunit methyltransferase H from Parasynechococcus marenigrum (strain WH8102).